A 306-amino-acid polypeptide reads, in one-letter code: Elongation factor Ts (306 aa).

The segment at 80–83 is involved in Mg(2+) ion dislocation from EF-Tu; it reads TDFV.

It belongs to the EF-Ts family.

The protein resides in the cytoplasm. In terms of biological role, associates with the EF-Tu.GDP complex and induces the exchange of GDP to GTP. It remains bound to the aminoacyl-tRNA.EF-Tu.GTP complex up to the GTP hydrolysis stage on the ribosome. The sequence is that of Elongation factor Ts from Clostridium kluyveri (strain NBRC 12016).